Here is a 315-residue protein sequence, read N- to C-terminus: Prephenate dehydratase (315 aa).

Residues 3–189 (RIAYLGPEGT…ARTRFVLVGP (187 aa)) form the Prephenate dehydratase domain. An ACT domain is found at 203–280 (SVVLRIDNAP…ADVRYLGSWP (78 aa)).

As to quaternary structure, homodimer.

The enzyme catalyses prephenate + H(+) = 3-phenylpyruvate + CO2 + H2O. Its pathway is amino-acid biosynthesis; L-phenylalanine biosynthesis; phenylpyruvate from prephenate: step 1/1. The protein is Prephenate dehydratase (pheA) of Mycobacterium avium (strain 104).